A 198-amino-acid polypeptide reads, in one-letter code: Na(+)-translocating NADH-quinone reductase subunit E (198 aa).

Helical transmembrane passes span 11-31 (SIFIENMALSFFLGMCTFLAV), 39-59 (FGLGVAVVVVLTLAVPLNNLV), 77-97 (FLNFITFIGVIAALVQILEMV), 110-130 (GIFLPLITVNCAIFGGVSFMV), 140-160 (IVYGFGSGVGWMLAIVALAGI), and 176-196 (LGITFITVGLMALGFMSFSGV).

It belongs to the NqrDE/RnfAE family. Composed of six subunits; NqrA, NqrB, NqrC, NqrD, NqrE and NqrF.

The protein resides in the cell inner membrane. The enzyme catalyses a ubiquinone + n Na(+)(in) + NADH + H(+) = a ubiquinol + n Na(+)(out) + NAD(+). NQR complex catalyzes the reduction of ubiquinone-1 to ubiquinol by two successive reactions, coupled with the transport of Na(+) ions from the cytoplasm to the periplasm. NqrA to NqrE are probably involved in the second step, the conversion of ubisemiquinone to ubiquinol. This Aliivibrio salmonicida (strain LFI1238) (Vibrio salmonicida (strain LFI1238)) protein is Na(+)-translocating NADH-quinone reductase subunit E.